The primary structure comprises 361 residues: Prostaglandin E2 receptor EP2 subtype (361 aa).

Polar residues predominate over residues 1–10; that stretch reads MGSISNNSGS. The segment at 1–21 is disordered; that stretch reads MGSISNNSGSEDCESREWLPS. At 1-23 the chain is on the extracellular side; the sequence is MGSISNNSGSEDCESREWLPSGE. The N-linked (GlcNAc...) asparagine glycan is linked to Asn6. The helical transmembrane segment at 24–47 threads the bilayer; it reads SPAISSAMFSAGVLGNLIALALLA. Residues 48–65 are Cytoplasmic-facing; it reads RRWRGDAGRRAGRGNSIS. A helical membrane pass occupies residues 66-91; sequence LFHVLVTELVFTDLLGTCLISPVVLA. At 92-111 the chain is on the extracellular side; the sequence is SYARNQTLMALEPERRACTY. The N-linked (GlcNAc...) asparagine glycan is linked to Asn96. Cys109 and Cys187 are joined by a disulfide. Residues 112 to 132 form a helical membrane-spanning segment; sequence FAFAMTFFSLATMLMLFAMAL. At 133-151 the chain is on the cytoplasmic side; it reads ERYLSIGRPYFYQRHVTRR. A helical membrane pass occupies residues 152–176; it reads GGLAVLPTIYTVSLLFCSLPLLGYG. At 177-198 the chain is on the extracellular side; the sequence is QYVQYCPGTWCFIRHGRTAYLQ. Residues 199-223 traverse the membrane as a helical segment; sequence LYATLLLLLIVAVLACNFSVILNLI. At 224-262 the chain is on the cytoplasmic side; it reads RMHRRSGRSRCGPSLGSCRDGSGTRRRGERVSVAEETDH. Residues 230–253 are disordered; it reads GRSRCGPSLGSCRDGSGTRRRGER. The chain crosses the membrane as a helical span at residues 263-286; the sequence is LILLAIMTITFAICSLPFTIFAYM. A glycan (N-linked (GlcNAc...) asparagine) is linked at Asn287. Residues 287-299 lie on the Extracellular side of the membrane; the sequence is NETSSRREKWDLQ. Residues 300–323 traverse the membrane as a helical segment; the sequence is ALRFLSINSIIDPWVFAIFRPPVL. At 324–361 the chain is on the cytoplasmic side; it reads RLMRSVLCCRVSLRAQDATQTSCSIQSNASRLTFVDTS.

The protein belongs to the G-protein coupled receptor 1 family.

Its subcellular location is the cell membrane. Functionally, receptor for prostaglandin E2 (PGE2). The activity of this receptor is mediated by G(s) proteins that stimulate adenylate cyclase. The subsequent raise in intracellular cAMP is responsible for the relaxing effect of this receptor on smooth muscle. This Canis lupus familiaris (Dog) protein is Prostaglandin E2 receptor EP2 subtype (PTGER2).